The sequence spans 438 residues: Chaperone SurA (438 aa).

The N-terminal stretch at M1–A28 is a signal peptide. PpiC domains are found at residues E181–S282 and V292–E390.

It is found in the periplasm. The catalysed reaction is [protein]-peptidylproline (omega=180) = [protein]-peptidylproline (omega=0). Its function is as follows. Chaperone involved in the correct folding and assembly of outer membrane proteins. Recognizes specific patterns of aromatic residues and the orientation of their side chains, which are found more frequently in integral outer membrane proteins. May act in both early periplasmic and late outer membrane-associated steps of protein maturation. The sequence is that of Chaperone SurA from Dechloromonas aromatica (strain RCB).